A 1962-amino-acid chain; its full sequence is Sodium channel protein type 10 subunit alpha (1962 aa).

The Cytoplasmic segment spans residues 1 to 125; sequence MEFPFGSLET…FNLIRRTAIK (125 aa). The tract at residues 32–56 is disordered; sequence QAAKKAKGKHREQKDQEEKPRPQLD. Basic residues predominate over residues 33 to 42; the sequence is AAKKAKGKHR. Residues 43 to 55 show a composition bias toward basic and acidic residues; it reads EQKDQEEKPRPQL. The I repeat unit spans residues 116 to 414; the sequence is FNLIRRTAIK…VTMAYEEQNQ (299 aa). Residues 126–149 traverse the membrane as a helical segment; the sequence is VSVHSWFSLFITVTILVNCVGMTQ. Topologically, residues 150–154 are extracellular; that stretch reads TELPD. A helical transmembrane segment spans residues 155-174; that stretch reads RIEYVFTVIYTFEALIKILA. Topologically, residues 175-187 are cytoplasmic; the sequence is RGFCLNEFAYLRD. Residues 188–206 traverse the membrane as a helical segment; the sequence is PWDWLDFSVITLAYIGEAT. The Extracellular segment spans residues 207–212; that stretch reads ALRGIS. Residues 213 to 232 traverse the membrane as a helical; Voltage-sensor segment; the sequence is GLRTFRVLRALKTVSVIPGL. Over 233–248 the chain is Cytoplasmic; that stretch reads KVIVGALIHSVRKLAD. A helical membrane pass occupies residues 249–272; sequence VTILTVFCLSVFALVGLQLFKGNL. At 273-350 the chain is on the extracellular side; that stretch reads KNKCVKNCAA…PDFNYTSFDS (78 aa). Cysteine 276 and cysteine 328 are joined by a disulfide. N-linked (GlcNAc...) asparagine glycans are attached at residues asparagine 284, asparagine 288, asparagine 321, and asparagine 344. The segment at residues 351-375 is an intramembrane region (pore-forming); sequence FAWAFLSLFRLMTQDSWERLYQQTL. Residues 376–382 lie on the Extracellular side of the membrane; that stretch reads RASGKMY. A helical membrane pass occupies residues 383 to 408; it reads MVFFVLVIFLGSFYLVNLILAVVTMA. Residues 409–668 lie on the Cytoplasmic side of the membrane; it reads YEEQNQATID…TWVKLKTVLF (260 aa). Residues serine 450, serine 453, serine 476, and serine 488 each carry the phosphoserine modification. The segment covering 452–463 has biased composition (polar residues); it reads HSCNGSPLPSKN. Disordered stretches follow at residues 452 to 493 and 521 to 586; these read HSCN…PYNQ and LDTS…TGEL. 2 positions are modified to phosphoserine: serine 621 and serine 624. The II repeat unit spans residues 656–920; it reads CCPTWVKLKT…DEDGEVNNLQ (265 aa). Residues 669–693 form a helical membrane-spanning segment; it reads GIVTDPFAELTTTLCIVVNTVFMAM. At 694–704 the chain is on the extracellular side; sequence EHHGMSSAFEA. A helical transmembrane segment spans residues 705 to 728; the sequence is MLQIGNIVFTVFFTAEMVFKIIAF. Topologically, residues 729–736 are cytoplasmic; it reads DPYYYFQK. A helical membrane pass occupies residues 737 to 756; the sequence is RWNIFDCIIVTVSLIELGAA. The Extracellular portion of the chain corresponds to 757–762; it reads RKGSLS. The helical; Voltage-sensor transmembrane segment at 763–782 threads the bilayer; it reads VLRTFRLLRVFKLAKSWPTL. The Cytoplasmic segment spans residues 783–798; sequence NTLIKIIGNSVGALGN. The chain crosses the membrane as a helical span at residues 799–819; sequence LTIILAIIVFVFALVGKQLLG. The Extracellular segment spans residues 820-843; the sequence is ENYRDNRRNISAPNEEWPRWHMHD. N-linked (GlcNAc...) asparagine glycosylation occurs at asparagine 828. An intramembrane region (pore-forming) is located at residues 844–864; sequence FFHSFLIVFRILCGEWIENMW. The Extracellular portion of the chain corresponds to 865–873; sequence ACMEVGQKS. Cysteine 866 and cysteine 875 are joined by a disulfide. Residues 874–899 traverse the membrane as a helical segment; it reads ICLILFLTVMVLGNLVVLNLFTALLL. Residues 900-1154 are Cytoplasmic-facing; that stretch reads NSFSADNLAT…GWQVRKTCYR (255 aa). Residues 1015–1026 show a composition bias toward acidic residues; that stretch reads LDDLEEDGEEDS. The segment at 1015-1035 is disordered; the sequence is LDDLEEDGEEDSQSSQQEVIL. An III repeat occupies 1147-1456; that stretch reads QVRKTCYRIV…KKYYNAMKKL (310 aa). The chain crosses the membrane as a helical span at residues 1155–1178; that stretch reads IVEHSWFESFIIFMILLSSGSLAF. The Extracellular portion of the chain corresponds to 1179-1191; that stretch reads EDYHLDQKPTVKA. A helical membrane pass occupies residues 1192-1217; it reads LLEYTDRMFTFIFVLEMLLKWVAYGF. Over 1218-1223 the chain is Cytoplasmic; the sequence is KKYFTN. The helical transmembrane segment at 1224-1245 threads the bilayer; that stretch reads AWCWLDFLIVNISLISLIAKIL. The Extracellular segment spans residues 1246–1249; that stretch reads QYSD. The chain crosses the membrane as a helical; Voltage-sensor span at residues 1250-1271; that stretch reads VASIKALRTLRALRPLRALSRF. Over 1272-1290 the chain is Cytoplasmic; sequence EGMRVVVDALVGAIPSIMN. The helical transmembrane segment at 1291-1318 threads the bilayer; sequence VLLVCLIFWLIFSTMGVNFFAGKFGRCI. Asparagine 1319, asparagine 1335, and asparagine 1343 each carry an N-linked (GlcNAc...) asparagine glycan. Topologically, residues 1319 to 1360 are extracellular; that stretch reads NKTNEYFSLVPLSIVNNISDCKYQNHTGSFFWVNVKVNFDNV. The segment at residues 1361-1382 is an intramembrane region (pore-forming); sequence AMGYLALLQVATFKGWMDIMYA. Topologically, residues 1383-1398 are extracellular; that stretch reads AVDARDVNLQPKWEDN. A helical transmembrane segment spans residues 1399-1425; that stretch reads VYMYLYFVIFIIFGGFFTLNLFVGVII. At 1426–1478 the chain is on the cytoplasmic side; sequence DNFNQQKKKLGGQDIFMTEEQKKYYNAMKKLGSKKPQKPIPRPLNKYQGFVFD. The residue at position 1458 (serine 1458) is a Phosphoserine; by PKC. An IV repeat occupies 1465–1764; sequence IPRPLNKYQG…WEKFDPEATQ (300 aa). Residues 1479–1502 form a helical membrane-spanning segment; sequence IVTKQAFDIVIMVLICLNMITMMV. Residues 1503 to 1513 lie on the Extracellular side of the membrane; the sequence is ETDEQSAEKTK. A helical transmembrane segment spans residues 1514–1537; sequence ILNKINQFFVAVFTGECVMKMFAL. Residues 1538-1543 are Cytoplasmic-facing; sequence RHYYFT. The helical transmembrane segment at 1544–1567 threads the bilayer; that stretch reads NGWNVFDFIVVVLSIGSLVFSVIL. Residues 1568-1579 lie on the Extracellular side of the membrane; the sequence is TSLENYFSPTLF. The chain crosses the membrane as a helical; Voltage-sensor span at residues 1580–1601; that stretch reads RVIRLARIGRILRLIRAAKGIR. The Cytoplasmic segment spans residues 1602 to 1616; it reads TLLFALMMSLPALFN. The helical transmembrane segment at 1617-1639 threads the bilayer; it reads IGLLLFLVMFIYSIFGMASFPHV. The Extracellular segment spans residues 1640-1653; that stretch reads SWEAGIDDMFNFQT. Residues 1654–1676 constitute an intramembrane region (pore-forming); that stretch reads FANSMLCLFQITTSAGWDGLLSP. Residues 1677-1704 are Extracellular-facing; it reads ILNTGPPYCDPNLPNSNGSRGNCGSPAV. N-linked (GlcNAc...) asparagine glycosylation is present at asparagine 1693. A helical membrane pass occupies residues 1705-1729; sequence GILFFTTYIIISFLIVVNMYIAVIL. Residues 1730–1962 lie on the Cytoplasmic side of the membrane; that stretch reads ENFNVATQES…TSKKVTAPGP (233 aa). The IQ domain occupies 1858–1887; that stretch reads EDISATVIQKAYRSYVLHRSMTISNPPAVP. Residues 1914 to 1962 are disordered; that stretch reads KSETASAASFPPSYDSVTRGLSDQINMSTSSSMQNEDEGTSKKVTAPGP. The span at 1928–1947 shows a compositional bias: polar residues; sequence DSVTRGLSDQINMSTSSSMQ.

It belongs to the sodium channel (TC 1.A.1.10) family. Nav1.8/SCN10A subfamily. The channel consists of an ion conducting pore forming alpha-subunit regulated by one or more associated auxiliary subunits SCN1B, SCN2B and SCN3B; electrophysiological properties may vary depending on the type of the associated beta subunits. Found in a number of complexes with PRX, DYNLT1 and PDZD2. Interacts with proteins such as FSTL1, PRX, DYNLT1, PDZD2, S100A10 and many others. Interacts with NEDD4 and NEDD4L. In terms of processing, ubiquitinated by NEDD4L; which promotes its endocytosis. Post-translationally, phosphorylation at Ser-1458 by PKC in a highly conserved cytoplasmic loop slows inactivation of the sodium channel and reduces peak sodium currents. Lacks the cysteine which covalently binds the conotoxin GVIIJ. This cysteine (position 825) is speculated in other sodium channel subunits alpha to be implied in covalent binding with the sodium channel subunit beta-2 or beta-4. As to expression, expressed in nodose ganglia, but not in cortex, hippocampus, cerebellum, liver, heart and skeletal muscle.

Its subcellular location is the cell membrane. It catalyses the reaction Na(+)(in) = Na(+)(out). Tetrodotoxin-resistant channel that mediates the voltage-dependent sodium ion permeability of excitable membranes. Assuming opened or closed conformations in response to the voltage difference across the membrane, the protein forms a sodium-selective channel through which sodium ions may pass in accordance with their electrochemical gradient. Plays a role in neuropathic pain mechanisms. The chain is Sodium channel protein type 10 subunit alpha (SCN10A) from Canis lupus familiaris (Dog).